A 343-amino-acid chain; its full sequence is Apolipoprotein L6 (343 aa).

Over residues 1 to 10 (MDNQAERESE) the composition is skewed to basic and acidic residues. The tract at residues 1 to 24 (MDNQAERESEAGVGLQRDEDDAPL) is disordered.

This sequence belongs to the apolipoprotein L family. As to expression, widely expressed; highly expressed in the uterus, fetal brain and spinal cord, also detected in heart, liver, lung, colon, spleen, thymus, prostate, placenta, adrenal gland, salivary and mammary gland.

Its subcellular location is the cytoplasm. Functionally, may affect the movement of lipids in the cytoplasm or allow the binding of lipids to organelles. This chain is Apolipoprotein L6 (APOL6), found in Homo sapiens (Human).